We begin with the raw amino-acid sequence, 749 residues long: Subtilisin-like protease SBT4.14 (749 aa).

An N-terminal signal peptide occupies residues 1–28 (MIRSKCSCHHHLLVLVMVVLWISPRYAS). Positions 29 to 115 (AEDEHAKDFY…VSRNQYRKLH (87 aa)) are cleaved as a propeptide — activation peptide. Residues 38 to 115 (YIIYLGDRPD…VSRNQYRKLH (78 aa)) form the Inhibitor I9 domain. Positions 119–595 (SWDFVGLPLT…GGQINPRRAA (477 aa)) constitute a Peptidase S8 domain. Asp-145 acts as the Charge relay system in catalysis. Asn-176 carries an N-linked (GlcNAc...) asparagine glycan. His-210 serves as the catalytic Charge relay system. 4 N-linked (GlcNAc...) asparagine glycosylation sites follow: Asn-225, Asn-233, Asn-446, and Asn-458. The active-site Charge relay system is the Ser-536. Asn-618 carries an N-linked (GlcNAc...) asparagine glycan.

It belongs to the peptidase S8 family. The C-terminal propeptide is autocleaved. As to expression, expressed only in roots, particularly in xylem.

The polypeptide is Subtilisin-like protease SBT4.14 (Arabidopsis thaliana (Mouse-ear cress)).